A 337-amino-acid chain; its full sequence is Regulator of RpoS (337 aa).

The Response regulatory domain maps to 9-123 (QILIVEDEQV…NRLREMVFAC (115 aa)). A 4-aspartylphosphate modification is found at D58.

The protein belongs to the RssB family. Binds to RpoS. In terms of processing, phosphorylated. Phosphorylation stimulates the interaction with RpoS and, therefore, the proteolysis of RpoS.

In terms of biological role, regulates the turnover of the sigma S factor (RpoS) by promoting its proteolysis in exponentially growing cells. Acts by binding and delivering RpoS to the ClpXP protease. RssB is not co-degraded with RpoS, but is released from the complex and can initiate a new cycle of RpoS recognition and degradation. This is Regulator of RpoS from Shigella flexneri.